Here is a 252-residue protein sequence, read N- to C-terminus: Type III pantothenate kinase (252 aa).

6 to 13 (DVGNTHTT) lines the ATP pocket. 104 to 107 (GADR) contributes to the substrate binding site. Catalysis depends on Asp-106, which acts as the Proton acceptor. Asp-126 serves as a coordination point for K(+). Thr-129 provides a ligand contact to ATP. Thr-180 contacts substrate.

The protein belongs to the type III pantothenate kinase family. In terms of assembly, homodimer. NH4(+) serves as cofactor. The cofactor is K(+).

The protein resides in the cytoplasm. The catalysed reaction is (R)-pantothenate + ATP = (R)-4'-phosphopantothenate + ADP + H(+). The protein operates within cofactor biosynthesis; coenzyme A biosynthesis; CoA from (R)-pantothenate: step 1/5. In terms of biological role, catalyzes the phosphorylation of pantothenate (Pan), the first step in CoA biosynthesis. The polypeptide is Type III pantothenate kinase (Fervidobacterium nodosum (strain ATCC 35602 / DSM 5306 / Rt17-B1)).